Reading from the N-terminus, the 194-residue chain is UPF0215 protein TV0037 (194 aa).

Belongs to the UPF0215 family.

This is UPF0215 protein TV0037 from Thermoplasma volcanium (strain ATCC 51530 / DSM 4299 / JCM 9571 / NBRC 15438 / GSS1).